Consider the following 246-residue polypeptide: 1-(5-phosphoribosyl)-5-[(5-phosphoribosylamino)methylideneamino] imidazole-4-carboxamide isomerase (246 aa).

Asp8 (proton acceptor) is an active-site residue. Asp130 serves as the catalytic Proton donor.

It belongs to the HisA/HisF family.

It localises to the cytoplasm. The catalysed reaction is 1-(5-phospho-beta-D-ribosyl)-5-[(5-phospho-beta-D-ribosylamino)methylideneamino]imidazole-4-carboxamide = 5-[(5-phospho-1-deoxy-D-ribulos-1-ylimino)methylamino]-1-(5-phospho-beta-D-ribosyl)imidazole-4-carboxamide. Its pathway is amino-acid biosynthesis; L-histidine biosynthesis; L-histidine from 5-phospho-alpha-D-ribose 1-diphosphate: step 4/9. The chain is 1-(5-phosphoribosyl)-5-[(5-phosphoribosylamino)methylideneamino] imidazole-4-carboxamide isomerase from Hydrogenovibrio crunogenus (strain DSM 25203 / XCL-2) (Thiomicrospira crunogena).